Here is a 552-residue protein sequence, read N- to C-terminus: Protoheme IX farnesyltransferase, mitochondrial (552 aa).

A disordered region spans residues Ala-118 to Ser-185. Over residues Glu-150 to Pro-168 the composition is skewed to low complexity. The next 8 membrane-spanning stretches (helical) occupy residues Leu-215–Phe-235, Leu-245–Leu-267, Ala-296–Val-316, Pro-318–Leu-338, Thr-346–Gly-366, Ala-387–Leu-407, Val-441–Val-461, and Ala-487–Leu-507.

It belongs to the UbiA prenyltransferase family.

Its subcellular location is the mitochondrion membrane. The enzyme catalyses heme b + (2E,6E)-farnesyl diphosphate + H2O = Fe(II)-heme o + diphosphate. Converts protoheme IX and farnesyl diphosphate to heme O. This chain is Protoheme IX farnesyltransferase, mitochondrial (COX10), found in Pyricularia oryzae (strain 70-15 / ATCC MYA-4617 / FGSC 8958) (Rice blast fungus).